Reading from the N-terminus, the 1148-residue chain is Putative ATP-dependent RNA helicase rha-2 (1148 aa).

Residues 1 to 10 (MGKRKTKEDN) are compositionally biased toward basic and acidic residues. Disordered regions lie at residues 1–51 (MGKR…FAKE) and 101–163 (STKL…DAGN). A compositionally biased stretch (acidic residues) spans 138-160 (PTDDESSSEEEEEEEEGDNDIED). A Helicase ATP-binding domain is found at 246–412 (VEAINENLVT…KLFPLLTPKV (167 aa)). Position 259 to 266 (259 to 266 (GETGSGKT)) interacts with ATP. The short motif at 355-358 (DEAH) is the DEAH box element. The region spanning 463 to 703 (EVKQLITKLK…QLVLHLKSMN (241 aa)) is the Helicase C-terminal domain.

Belongs to the DEAD box helicase family. DEAH subfamily.

The catalysed reaction is ATP + H2O = ADP + phosphate + H(+). Its function is as follows. Probable ATP-binding RNA helicase. This is Putative ATP-dependent RNA helicase rha-2 (rha-2) from Caenorhabditis elegans.